A 48-amino-acid chain; its full sequence is Histone H4 (48 aa).

Positions Met1–Lys14 are enriched in gly residues. The segment at Met1–Arg23 is disordered.

Belongs to the histone H4 family. As to quaternary structure, the nucleosome is a histone octamer containing two molecules each of H2A, H2B, H3 and H4 assembled in one H3-H4 heterotetramer and two H2A-H2B heterodimers. The octamer wraps approximately 147 bp of DNA.

The protein resides in the nucleus. It localises to the chromosome. In terms of biological role, core component of nucleosome. Nucleosomes wrap and compact DNA into chromatin, limiting DNA accessibility to the cellular machineries which require DNA as a template. Histones thereby play a central role in transcription regulation, DNA repair, DNA replication and chromosomal stability. DNA accessibility is regulated via a complex set of post-translational modifications of histones, also called histone code, and nucleosome remodeling. This is Histone H4 from Blepharisma japonicum.